We begin with the raw amino-acid sequence, 241 residues long: MIILSTNDNLTNPYEIARYIKEAKKSTPVRAYIQGNIEIEETEELEVYGCDNFKIVFGELEVVEKLLEINKDKIKHYRLEYDRRNSAIPLLDIKHLDARIEPGAIIRDKVKIGKNAVIMMGAVINIGAEIGENSMIDMNAVIGARGIIGKNVHVGAGAVIAGVLEPPSSVPVVLEDNVLVGANAVILEGVRVGHGAVVAAGSVVTEDVPPNTVVAGVPAKIVKIVDDKTREKTKLMEDLRG.

This sequence belongs to the transferase hexapeptide repeat family. DapH subfamily.

The catalysed reaction is (S)-2,3,4,5-tetrahydrodipicolinate + acetyl-CoA + H2O = L-2-acetamido-6-oxoheptanedioate + CoA. It functions in the pathway amino-acid biosynthesis; L-lysine biosynthesis via DAP pathway; LL-2,6-diaminopimelate from (S)-tetrahydrodipicolinate (acetylase route): step 1/3. Its function is as follows. Catalyzes the transfer of an acetyl group from acetyl-CoA to tetrahydrodipicolinate. This Thermoanaerobacter pseudethanolicus (strain ATCC 33223 / 39E) (Clostridium thermohydrosulfuricum) protein is 2,3,4,5-tetrahydropyridine-2,6-dicarboxylate N-acetyltransferase.